The sequence spans 153 residues: ATP synthase subunit b' (153 aa).

A helical membrane pass occupies residues 23 to 40; sequence LMAIQVVALTYILNSLFF.

The protein belongs to the ATPase B chain family. In terms of assembly, F-type ATPases have 2 components, F(1) - the catalytic core - and F(0) - the membrane proton channel. F(1) has five subunits: alpha(3), beta(3), gamma(1), delta(1), epsilon(1). F(0) has four main subunits: a(1), b(1), b'(1) and c(10-14). The alpha and beta chains form an alternating ring which encloses part of the gamma chain. F(1) is attached to F(0) by a central stalk formed by the gamma and epsilon chains, while a peripheral stalk is formed by the delta, b and b' chains.

Its subcellular location is the cellular thylakoid membrane. In terms of biological role, f(1)F(0) ATP synthase produces ATP from ADP in the presence of a proton or sodium gradient. F-type ATPases consist of two structural domains, F(1) containing the extramembraneous catalytic core and F(0) containing the membrane proton channel, linked together by a central stalk and a peripheral stalk. During catalysis, ATP synthesis in the catalytic domain of F(1) is coupled via a rotary mechanism of the central stalk subunits to proton translocation. Functionally, component of the F(0) channel, it forms part of the peripheral stalk, linking F(1) to F(0). The b'-subunit is a diverged and duplicated form of b found in plants and photosynthetic bacteria. The protein is ATP synthase subunit b' of Prochlorococcus marinus (strain MIT 9515).